The primary structure comprises 304 residues: Ferredoxin fas2 (304 aa).

A 4Fe-4S ferredoxin-type domain is found at 2–29; that stretch reads KVVVNERRCFGSGQCVLVAPEVFEQSND. [3Fe-4S] cluster-binding residues include Cys-10, Cys-16, and Cys-54. Positions 66 to 304 are transketolase-like; it reads MRQEPTEFSY…QSARSSIQQR (239 aa).

This sequence in the C-terminal section; belongs to the transketolase family. It depends on [3Fe-4S] cluster as a cofactor.

In terms of biological role, plays a role in electron transfer. The fas operon encodes genes involved in cytokinin production and in host plant fasciation (leafy gall). The sequence is that of Ferredoxin fas2 (fas2) from Rhodococcoides fascians (Rhodococcus fascians).